Consider the following 436-residue polypeptide: Nucleolar protein 4-like (436 aa).

Residues Met-1–Pro-184 are disordered. Residues Ser-41–Gln-61 show a composition bias toward low complexity. Ser-130 carries the post-translational modification Phosphoserine. Over residues Ala-160–Asp-169 the composition is skewed to acidic residues. Over residues His-170–Pro-184 the composition is skewed to basic and acidic residues. Ser-295 bears the Phosphoserine mark. Residues Gln-351–Thr-366 show a composition bias toward polar residues. Positions Gln-351 to Ser-400 are disordered. Low complexity predominate over residues Ser-375 to Thr-396.

The polypeptide is Nucleolar protein 4-like (NOL4L) (Homo sapiens (Human)).